The primary structure comprises 374 residues: Aminomethyltransferase (374 aa).

It belongs to the GcvT family. The glycine cleavage system is composed of four proteins: P, T, L and H.

The enzyme catalyses N(6)-[(R)-S(8)-aminomethyldihydrolipoyl]-L-lysyl-[protein] + (6S)-5,6,7,8-tetrahydrofolate = N(6)-[(R)-dihydrolipoyl]-L-lysyl-[protein] + (6R)-5,10-methylene-5,6,7,8-tetrahydrofolate + NH4(+). Its function is as follows. The glycine cleavage system catalyzes the degradation of glycine. This is Aminomethyltransferase from Edwardsiella ictaluri (strain 93-146).